Here is a 301-residue protein sequence, read N- to C-terminus: Type II restriction enzyme BslI subunit beta (301 aa).

The CHC2-type zinc-finger motif lies at 62 to 82 (CPDGHTKWNQNLTKEMTCSEC).

As to quaternary structure, heterotetramer of two alpha and two beta subunits. The alpha subunit is believed to be responsible for DNA recognition, while the beta subunit is thought to mediate cleavage. Zn(2+) is required as a cofactor.

It catalyses the reaction Endonucleolytic cleavage of DNA to give specific double-stranded fragments with terminal 5'-phosphates.. Its function is as follows. A P subtype restriction enzyme that recognizes the double-stranded sequence 5'-CCN(7)GG-3' and cleaves after N-7. The sequence is that of Type II restriction enzyme BslI subunit beta from Bacillus sp. (strain NEB-606).